The chain runs to 506 residues: Glycerol kinase (506 aa).

T14 lines the ADP pocket. ATP-binding residues include T14, T15, and S16. T14 serves as a coordination point for sn-glycerol 3-phosphate. R18 is a binding site for ADP. Positions 84, 85, and 136 each coordinate sn-glycerol 3-phosphate. Glycerol contacts are provided by R84, E85, and Y136. H232 bears the Phosphohistidine; by HPr mark. D246 contacts sn-glycerol 3-phosphate. The glycerol site is built by D246 and Q247. ADP-binding residues include T268 and G311. Residues T268, G311, Q315, and G412 each coordinate ATP. ADP is bound by residues G412 and N416.

It belongs to the FGGY kinase family. As to quaternary structure, homotetramer and homodimer (in equilibrium). In terms of processing, the phosphoenolpyruvate-dependent sugar phosphotransferase system (PTS), including enzyme I, and histidine-containing protein (HPr) are required for the phosphorylation of His-232, which leads to the activation of the enzyme.

The catalysed reaction is glycerol + ATP = sn-glycerol 3-phosphate + ADP + H(+). It participates in polyol metabolism; glycerol degradation via glycerol kinase pathway; sn-glycerol 3-phosphate from glycerol: step 1/1. Activated by phosphorylation and inhibited by fructose 1,6-bisphosphate (FBP). Functionally, key enzyme in the regulation of glycerol uptake and metabolism. Catalyzes the phosphorylation of glycerol to yield sn-glycerol 3-phosphate. In Enterococcus casseliflavus (Enterococcus flavescens), this protein is Glycerol kinase.